A 291-amino-acid polypeptide reads, in one-letter code: Ribosomal RNA small subunit methyltransferase A (291 aa).

Residues histidine 21, leucine 23, glycine 48, glutamate 70, aspartate 95, and asparagine 115 each coordinate S-adenosyl-L-methionine.

This sequence belongs to the class I-like SAM-binding methyltransferase superfamily. rRNA adenine N(6)-methyltransferase family. RsmA subfamily.

The protein localises to the cytoplasm. The catalysed reaction is adenosine(1518)/adenosine(1519) in 16S rRNA + 4 S-adenosyl-L-methionine = N(6)-dimethyladenosine(1518)/N(6)-dimethyladenosine(1519) in 16S rRNA + 4 S-adenosyl-L-homocysteine + 4 H(+). Specifically dimethylates two adjacent adenosines (A1518 and A1519) in the loop of a conserved hairpin near the 3'-end of 16S rRNA in the 30S particle. May play a critical role in biogenesis of 30S subunits. This chain is Ribosomal RNA small subunit methyltransferase A, found in Prochlorococcus marinus (strain NATL1A).